A 418-amino-acid chain; its full sequence is Inward rectifier potassium channel 16 (418 aa).

At 1–67 (MSYYGSSYHI…VVDIFTTLVD (67 aa)) the chain is on the cytoplasmic side. A helical membrane pass occupies residues 68–94 (TKWRHMFVIFSLSYILSWLIFGSVFWL). The Extracellular portion of the chain corresponds to 95-117 (IAFHHGDLLNDPDITPCVDNVHS). The segment at residues 118-134 (FTGAFLFSLETQTTIGY) is an intramembrane region (helical; Pore-forming). Residues 131 to 136 (TIGYGY) carry the Selectivity filter motif. Residues 135-143 (GYRCVTEEC) are Extracellular-facing. A helical transmembrane segment spans residues 144-171 (SVAVLMVILQSILSCIINTFIIGAALAK). Over 172–418 (MATARKRAQT…LNRISVESQM (247 aa)) the chain is Cytoplasmic. Residues Ser-373 and Ser-375 each carry the phosphoserine modification.

This sequence belongs to the inward rectifier-type potassium channel (TC 1.A.2.1) family. KCNJ16 subfamily. In terms of assembly, it forms heteromeric channels with Kir4.1/KCNJ10; this interaction is required for KCNJ16 localization to the basolateral membrane in kidney cells. As a heteromer with KCNJ10, may interact with MAGI1; this interaction may facilitate KCNJ10/KCNJ16 potassium channel expression at the basolateral membrane in kidney cells. May form heteromers with Kir2.1/KCNJ2. Can form heteromeric channels with Kir4.2/KCNJ15. In terms of tissue distribution, widely expressed, with highest levels in adult and fetal kidney (at protein level). In the kidney, expressed in the proximal and distal convoluted tubules, but not in glomeruli nor collecting ducts.

The protein resides in the membrane. It localises to the basolateral cell membrane. It catalyses the reaction K(+)(in) = K(+)(out). Its activity is regulated as follows. Channel activity is strongly regulated by variations of cytosolic pH; channels are activated by alkaline and inhibited by acidic pH values. Activated by phosphatidylinositol 4,5 biphosphate (PtdIns(4,5)P2). Functionally, inward rectifier potassium channels are characterized by a greater tendency to allow potassium to flow into the cell rather than out of it. Their voltage dependence is regulated by the concentration of extracellular potassium; as external potassium is raised, the voltage range of the channel opening shifts to more positive voltages. The inward rectification is mainly due to the blockage of outward current by internal magnesium. KCNJ16 may be involved in the regulation of fluid and pH balance. In the kidney, together with KCNJ10, mediates basolateral K(+) recycling in distal tubules; this process is critical for Na(+) reabsorption at the tubules. In Homo sapiens (Human), this protein is Inward rectifier potassium channel 16 (KCNJ16).